The chain runs to 69 residues: uncharacterized protein (69 aa).

A signal peptide spans 1-16; sequence MSLGLIFALLLTHAAA.

This is an uncharacterized protein from Archaeoglobus fulgidus (strain ATCC 49558 / DSM 4304 / JCM 9628 / NBRC 100126 / VC-16).